A 105-amino-acid polypeptide reads, in one-letter code: Large ribosomal subunit protein bL21 (105 aa).

Belongs to the bacterial ribosomal protein bL21 family. Part of the 50S ribosomal subunit. Contacts protein L20.

Functionally, this protein binds to 23S rRNA in the presence of protein L20. The chain is Large ribosomal subunit protein bL21 from Rickettsia canadensis (strain McKiel).